The sequence spans 464 residues: Phospho-2-dehydro-3-deoxyheptonate aldolase AroG (464 aa).

Cys-87 is a Mn(2+) binding site. Phosphoenolpyruvate contacts are provided by residues Arg-126, 285-286 (ER), Lys-308, and Arg-339. His-371, Glu-413, and Asp-443 together coordinate Mn(2+).

It belongs to the class-II DAHP synthase family. Homodimer. Probably interacts with MSMEG_5536. Requires Mn(2+) as cofactor. Co(2+) serves as cofactor. The cofactor is Cd(2+).

It catalyses the reaction D-erythrose 4-phosphate + phosphoenolpyruvate + H2O = 7-phospho-2-dehydro-3-deoxy-D-arabino-heptonate + phosphate. It functions in the pathway metabolic intermediate biosynthesis; chorismate biosynthesis; chorismate from D-erythrose 4-phosphate and phosphoenolpyruvate: step 1/7. Functionally, catalyzes an aldol-like condensation reaction between phosphoenolpyruvate (PEP) and D-erythrose 4-phosphate (E4P) to generate 3-deoxy-D-arabino-heptulosonate 7-phosphate (DAH7P) and inorganic phosphate. This is Phospho-2-dehydro-3-deoxyheptonate aldolase AroG (aroG) from Mycolicibacterium smegmatis (strain ATCC 700084 / mc(2)155) (Mycobacterium smegmatis).